A 177-amino-acid polypeptide reads, in one-letter code: Phosphatidylglycerol/phosphatidylinositol transfer protein (177 aa).

A signal peptide spans 1–17 (MRLSAAVIALLSTSAAA). The propeptide occupies 18-30 (FSVYRENSVSAND).

It belongs to the NPC2 family. As to quaternary structure, monomer.

In terms of biological role, catalyzes the intermembrane transfer of phosphatidylglycerol and phosphatidylinositol. This Neurospora crassa (strain ATCC 24698 / 74-OR23-1A / CBS 708.71 / DSM 1257 / FGSC 987) protein is Phosphatidylglycerol/phosphatidylinositol transfer protein (npc-2).